Reading from the N-terminus, the 193-residue chain is RNA pyrophosphohydrolase (193 aa).

The region spanning G6 to Q149 is the Nudix hydrolase domain. The Nudix box signature appears at G38 to G59. The tract at residues T174–E193 is disordered.

It belongs to the Nudix hydrolase family. RppH subfamily. It depends on a divalent metal cation as a cofactor.

Accelerates the degradation of transcripts by removing pyrophosphate from the 5'-end of triphosphorylated RNA, leading to a more labile monophosphorylated state that can stimulate subsequent ribonuclease cleavage. This chain is RNA pyrophosphohydrolase, found in Herminiimonas arsenicoxydans.